We begin with the raw amino-acid sequence, 97 residues long: Large ribosomal subunit protein uL23 (97 aa).

This sequence belongs to the universal ribosomal protein uL23 family. In terms of assembly, part of the 50S ribosomal subunit. Contacts protein L29, and trigger factor when it is bound to the ribosome.

In terms of biological role, one of the early assembly proteins it binds 23S rRNA. One of the proteins that surrounds the polypeptide exit tunnel on the outside of the ribosome. Forms the main docking site for trigger factor binding to the ribosome. The chain is Large ribosomal subunit protein uL23 from Sinorhizobium medicae (strain WSM419) (Ensifer medicae).